Reading from the N-terminus, the 578-residue chain is Ribonuclease SLFN12 (578 aa).

S368 is subject to Phosphoserine. The mediates interaction with PDE3A stretch occupies residues 551 to 560 (AENLYQIIGI). Position 573 is a phosphoserine (S573).

It belongs to the Schlafen family. Subgroup II subfamily. Homodimer. Interacts with PDE3A; direct low affinity interaction which is stimulated by binding of 17beta-estradiol/E2 to PDE3A and that positively regulates the ribonuclease activity of SLFN12. Interacts with SERPINB12; as part of a pathway regulating cell differentiation. Phosphorylation at Ser-368 and Ser-573 negatively regulates the ribonuclease activity. Dephosphorylation is induced by the interaction with PDE3A and stimulates the rRNA ribonuclease activity.

It localises to the nucleus. The protein localises to the cytoplasm. Its subcellular location is the cytosol. Its function is as follows. Ribonuclease which is part of an E2/17beta-estradiol-induced pro-apoptotic signaling pathway. E2 stabilizes the PDE3A/SLFN12 complex in the cytosol, promoting the dephosphorylation of SLFN12 and activating its pro-apoptotic ribosomal RNA/rRNA ribonuclease activity. This apoptotic pathway might be relevant in tissues with high concentration of E2 and be for instance involved in placenta remodeling. May play a role in cell differentiation. This chain is Ribonuclease SLFN12, found in Homo sapiens (Human).